The chain runs to 178 residues: Lipid A deacylase PagL (178 aa).

The N-terminal stretch at 1–19 is a signal peptide; that stretch reads MQFLKKNKPLFGIVTLALA. Residues H154, S156, and D168 each act as charge relay system in the active site.

Belongs to the PagL family. Homodimer.

It is found in the cell outer membrane. The catalysed reaction is a 3-(acyloxy)acyl derivative of bacterial toxin + H2O = a 3-hydroxyacyl derivative of bacterial toxin + a fatty acid + H(+). Functionally, has lipid A 3-O-deacylase activity. Hydrolyzes the ester bond at the 3 position of lipid A, a bioactive component of lipopolysaccharide (LPS), thereby releasing the primary fatty acyl moiety. The chain is Lipid A deacylase PagL from Bordetella bronchiseptica (strain ATCC BAA-588 / NCTC 13252 / RB50) (Alcaligenes bronchisepticus).